A 565-amino-acid polypeptide reads, in one-letter code: CTP synthase (565 aa).

Positions 1 to 272 (MARPKNVKHI…DKRVLKKLGI (272 aa)) are amidoligase domain. Ser18 is a binding site for CTP. Ser18 contributes to the UTP binding site. 19 to 24 (SLGKGI) is an ATP binding site. Tyr59 provides a ligand contact to L-glutamine. Asp76 provides a ligand contact to ATP. Asp76 and Glu146 together coordinate Mg(2+). CTP is bound by residues 153-155 (DIE), 193-198 (KTKPTQ), and Lys229. Residues 193-198 (KTKPTQ) and Lys229 contribute to the UTP site. Residues 299–543 (TIAVCGKYTE…VAAAKAFAFG (245 aa)) enclose the Glutamine amidotransferase type-1 domain. Gly363 lines the L-glutamine pocket. Cys390 functions as the Nucleophile; for glutamine hydrolysis in the catalytic mechanism. L-glutamine contacts are provided by residues 391 to 394 (LGMQ), Glu414, and Arg471. Catalysis depends on residues His516 and Glu518.

This sequence belongs to the CTP synthase family. Homotetramer.

The catalysed reaction is UTP + L-glutamine + ATP + H2O = CTP + L-glutamate + ADP + phosphate + 2 H(+). It catalyses the reaction L-glutamine + H2O = L-glutamate + NH4(+). The enzyme catalyses UTP + NH4(+) + ATP = CTP + ADP + phosphate + 2 H(+). The protein operates within pyrimidine metabolism; CTP biosynthesis via de novo pathway; CTP from UDP: step 2/2. With respect to regulation, allosterically activated by GTP, when glutamine is the substrate; GTP has no effect on the reaction when ammonia is the substrate. The allosteric effector GTP functions by stabilizing the protein conformation that binds the tetrahedral intermediate(s) formed during glutamine hydrolysis. Inhibited by the product CTP, via allosteric rather than competitive inhibition. Catalyzes the ATP-dependent amination of UTP to CTP with either L-glutamine or ammonia as the source of nitrogen. Regulates intracellular CTP levels through interactions with the four ribonucleotide triphosphates. The chain is CTP synthase from Chlorobium phaeobacteroides (strain BS1).